We begin with the raw amino-acid sequence, 156 residues long: Small ribosomal subunit protein uS7 (156 aa).

The protein belongs to the universal ribosomal protein uS7 family. In terms of assembly, part of the 30S ribosomal subunit. Contacts proteins S9 and S11.

Functionally, one of the primary rRNA binding proteins, it binds directly to 16S rRNA where it nucleates assembly of the head domain of the 30S subunit. Is located at the subunit interface close to the decoding center, probably blocks exit of the E-site tRNA. The protein is Small ribosomal subunit protein uS7 of Saccharophagus degradans (strain 2-40 / ATCC 43961 / DSM 17024).